The primary structure comprises 235 residues: Putative N-acetylmannosamine-6-phosphate 2-epimerase (235 aa).

Belongs to the NanE family.

It catalyses the reaction an N-acyl-D-glucosamine 6-phosphate = an N-acyl-D-mannosamine 6-phosphate. The protein operates within amino-sugar metabolism; N-acetylneuraminate degradation; D-fructose 6-phosphate from N-acetylneuraminate: step 3/5. Converts N-acetylmannosamine-6-phosphate (ManNAc-6-P) to N-acetylglucosamine-6-phosphate (GlcNAc-6-P). The polypeptide is Putative N-acetylmannosamine-6-phosphate 2-epimerase (Edwardsiella ictaluri (strain 93-146)).